The following is a 211-amino-acid chain: Arginine exporter protein ArgO (211 aa).

6 helical membrane passes run M1–P21, I37–G57, L68–F88, I111–V131, W147–A167, and I182–G202.

Belongs to the LysE/ArgO transporter (TC 2.A.75) family.

Its subcellular location is the cell inner membrane. It catalyses the reaction L-arginine(in) = L-arginine(out). In terms of biological role, involved in the export of arginine. Important to control the intracellular level of arginine and the correct balance between arginine and lysine. The chain is Arginine exporter protein ArgO from Escherichia coli O157:H7.